A 729-amino-acid polypeptide reads, in one-letter code: Sodium-dependent neutral amino acid transporter B(0)AT2 (729 aa).

Residues 1–69 (MPKNSKVVKR…ARPAWNSKLQ (69 aa)) lie on the Cytoplasmic side of the membrane. Phosphoserine occurs at positions 25 and 55. A run of 3 helical transmembrane segments spans residues 70-90 (YILA…FPYL), 98-117 (AYLL…LFFL), and 142-162 (GIGF…NVII). Residues 163–225 (GWSLFYFSQS…TSISESGGLN (63 aa)) are Extracellular-facing. N187 and N213 each carry an N-linked (GlcNAc...) asparagine glycan. The next 4 membrane-spanning stretches (helical) occupy residues 226–244 (WKMT…LAMI), 253–270 (IMYF…CFLI), 306–323 (VFFA…FSSY), and 335–356 (VLVS…FAVL). At 357–452 (GFKANVINEK…FIAFTEAMTH (96 aa)) the chain is on the extracellular side. 2 N-linked (GlcNAc...) asparagine glycosylation sites follow: N383 and N394. The next 5 helical transmembrane spans lie at 453 to 472 (FPAS…NLGL), 496 to 514 (ILTV…IFVQ), 530 to 550 (TLPL…VYGI), 571 to 592 (YMWK…IVNM), and 620 to 642 (VICI…IRRC). Residues 643–729 (NLIDDSSGNL…DMPDMPESDL (87 aa)) lie on the Cytoplasmic side of the membrane. Residues S687, S699, and S701 each carry the phosphoserine modification.

Belongs to the sodium:neurotransmitter symporter (SNF) (TC 2.A.22) family. SLC6A15 subfamily.

It localises to the membrane. It carries out the reaction L-leucine(in) + Na(+)(in) = L-leucine(out) + Na(+)(out). It catalyses the reaction L-isoleucine(in) + Na(+)(in) = L-isoleucine(out) + Na(+)(out). The enzyme catalyses L-methionine(in) + Na(+)(in) = L-methionine(out) + Na(+)(out). The catalysed reaction is L-proline(in) + Na(+)(in) = L-proline(out) + Na(+)(out). It carries out the reaction L-alanine(in) + Na(+)(in) = L-alanine(out) + Na(+)(out). It catalyses the reaction L-asparagine(in) + Na(+)(in) = L-asparagine(out) + Na(+)(out). The enzyme catalyses L-valine(in) + Na(+)(in) = L-valine(out) + Na(+)(out). The catalysed reaction is L-cysteine(in) + Na(+)(in) = L-cysteine(out) + Na(+)(out). It carries out the reaction L-glutamine(in) + Na(+)(in) = L-glutamine(out) + Na(+)(out). It catalyses the reaction L-serine(in) + Na(+)(in) = L-serine(out) + Na(+)(out). The enzyme catalyses L-threonine(in) + Na(+)(in) = L-threonine(out) + Na(+)(out). The catalysed reaction is L-pipecolate(in) + Na(+)(in) = L-pipecolate(out) + Na(+)(out). It carries out the reaction L-phenylalanine(in) + Na(+)(in) = L-phenylalanine(out) + Na(+)(out). Functionally, functions as a sodium-dependent neutral amino acid transporter. Exhibits preference for the branched-chain amino acids, particularly leucine, valine and isoleucine and methionine. Can also transport low-affinity substrates such as alanine, phenylalanine, glutamine and pipecolic acid. Mediates the saturable, pH-sensitive and electrogenic cotransport of proline and sodium ions with a stoichiometry of 1:1. May have a role as transporter for neurotransmitter precursors into neurons. In contrast to other members of the neurotransmitter transporter family, does not appear to be chloride-dependent. The sequence is that of Sodium-dependent neutral amino acid transporter B(0)AT2 (SLC6A15) from Bos taurus (Bovine).